The sequence spans 691 residues: DNA ligase (691 aa).

Residues 53 to 57, 102 to 103, and glutamate 135 each bind NAD(+); these read DSEYD and SL. Lysine 137 (N6-AMP-lysine intermediate) is an active-site residue. The NAD(+) site is built by arginine 158, glutamate 195, lysine 310, and lysine 334. The Zn(2+) site is built by cysteine 428, cysteine 431, cysteine 446, and cysteine 452. The 79-residue stretch at 613–691 folds into the BRCT domain; sequence SEGLPLDGQT…EEEFLALVGE (79 aa).

The protein belongs to the NAD-dependent DNA ligase family. LigA subfamily. Requires Mg(2+) as cofactor. The cofactor is Mn(2+).

It carries out the reaction NAD(+) + (deoxyribonucleotide)n-3'-hydroxyl + 5'-phospho-(deoxyribonucleotide)m = (deoxyribonucleotide)n+m + AMP + beta-nicotinamide D-nucleotide.. Functionally, DNA ligase that catalyzes the formation of phosphodiester linkages between 5'-phosphoryl and 3'-hydroxyl groups in double-stranded DNA using NAD as a coenzyme and as the energy source for the reaction. It is essential for DNA replication and repair of damaged DNA. In Psychrobacter arcticus (strain DSM 17307 / VKM B-2377 / 273-4), this protein is DNA ligase.